A 70-amino-acid polypeptide reads, in one-letter code: Large ribosomal subunit protein bL31 (70 aa).

Residues C16, C18, C37, and C40 each contribute to the Zn(2+) site.

This sequence belongs to the bacterial ribosomal protein bL31 family. Type A subfamily. As to quaternary structure, part of the 50S ribosomal subunit. Zn(2+) serves as cofactor.

Binds the 23S rRNA. This Shewanella oneidensis (strain ATCC 700550 / JCM 31522 / CIP 106686 / LMG 19005 / NCIMB 14063 / MR-1) protein is Large ribosomal subunit protein bL31.